A 339-amino-acid chain; its full sequence is Anthranilate phosphoribosyltransferase (339 aa).

Residues glycine 78, 81-82 (GD), threonine 86, 88-91 (NAST), 106-114 (KHGNRSVTS), and serine 118 each bind 5-phospho-alpha-D-ribose 1-diphosphate. Glycine 78 contributes to the anthranilate binding site. Serine 90 contacts Mg(2+). Asparagine 109 serves as a coordination point for anthranilate. Arginine 164 lines the anthranilate pocket. The Mg(2+) site is built by aspartate 225 and glutamate 226. Positions 248 to 265 (TVAPEDVGLDRADPKDVA) are enriched in basic and acidic residues. A disordered region spans residues 248-271 (TVAPEDVGLDRADPKDVAGADPET).

The protein belongs to the anthranilate phosphoribosyltransferase family. As to quaternary structure, homodimer. Mg(2+) serves as cofactor.

The catalysed reaction is N-(5-phospho-beta-D-ribosyl)anthranilate + diphosphate = 5-phospho-alpha-D-ribose 1-diphosphate + anthranilate. It participates in amino-acid biosynthesis; L-tryptophan biosynthesis; L-tryptophan from chorismate: step 2/5. Functionally, catalyzes the transfer of the phosphoribosyl group of 5-phosphorylribose-1-pyrophosphate (PRPP) to anthranilate to yield N-(5'-phosphoribosyl)-anthranilate (PRA). The polypeptide is Anthranilate phosphoribosyltransferase (Methanopyrus kandleri (strain AV19 / DSM 6324 / JCM 9639 / NBRC 100938)).